The primary structure comprises 187 residues: Putative acyl-coenzyme A oxidase At3g06690 (187 aa).

A disordered region spans residues 1-21 (MTKEPIYSPRMLHRDPDSPRP).

It belongs to the acyl-CoA oxidase family.

The catalysed reaction is a 2,3-saturated acyl-CoA + O2 = a (2E)-enoyl-CoA + H2O2. This is Putative acyl-coenzyme A oxidase At3g06690 from Arabidopsis thaliana (Mouse-ear cress).